A 322-amino-acid polypeptide reads, in one-letter code: Mas-related G-protein coupled receptor member X4 (322 aa).

Over Met-1–Thr-31 the chain is Extracellular. Asn-25 is a glycosylation site (N-linked (GlcNAc...) asparagine). Residues Val-32–Leu-52 form a helical membrane-spanning segment. Topologically, residues Gly-53–Ala-60 are cytoplasmic. The helical transmembrane segment at Val-61 to Ile-81 threads the bilayer. At Arg-82–Lys-96 the chain is on the extracellular side. Asn-89 carries an N-linked (GlcNAc...) asparagine glycan. A helical membrane pass occupies residues Ile-97–Ser-117. At Thr-118–His-137 the chain is on the cytoplasmic side. Residues Leu-138 to Trp-158 traverse the membrane as a helical segment. Residues Arg-159–Asp-177 lie on the Extracellular side of the membrane. Residues Phe-178 to Leu-198 traverse the membrane as a helical segment. The Cytoplasmic portion of the chain corresponds to Leu-199–Ile-218. Residues Leu-219–Ile-239 traverse the membrane as a helical segment. Over Tyr-240 to Tyr-254 the chain is Extracellular. A helical membrane pass occupies residues Leu-255–Val-275. The Cytoplasmic portion of the chain corresponds to Gly-276–Pro-322. The segment at Pro-299–Pro-322 is disordered.

It belongs to the G-protein coupled receptor 1 family. Mas subfamily. As to expression, uniquely localized in a subset of small dorsal root and trigeminal sensory neurons.

The protein localises to the cell membrane. Its function is as follows. Orphan receptor. Probably involved in the function of nociceptive neurons. May regulate nociceptor function and/or development, including the sensation or modulation of pain. Potently activated by enkephalins. The protein is Mas-related G-protein coupled receptor member X4 (MRGPRX4) of Homo sapiens (Human).